The primary structure comprises 278 residues: Envelope glycoprotein L (278 aa).

Residues 1–30 (MCRRPDCGFSFSPGPVILLWCCLLLPIVSS) form the signal peptide. A gL betaherpesvirus-type domain is found at 43–256 (VPAECPELTR…DKYYAGLPPE (214 aa)). Cysteine 154 and cysteine 159 are oxidised to a cystine.

The protein belongs to the herpesviridae glycoprotein L (gL) family. Betaherpesvirinae gL subfamily. In terms of assembly, interacts with glycoprotein H (gH); this interaction is necessary for the correct processing and cell surface expression of gH. Forms the envelope pentamer complex (PC) composed of gH, gL, UL128, UL130, and UL131A. The pentamer interacts with host NRP2. Forms the envelope trimer complex composed of gH, gL, and gO. The trimer interacts with host PDGFRA. The trimer also interacts with host EPHA2.

The protein resides in the virion membrane. It localises to the host cell membrane. It is found in the host Golgi apparatus. The protein localises to the host trans-Golgi network. The heterodimer glycoprotein H-glycoprotein L is required for the fusion of viral and plasma membranes leading to virus entry into the host cell. Acts as a functional inhibitor of gH and maintains gH in an inhibited form. Upon binding to host integrins, gL dissociates from gH leading to activation of the viral fusion glycoproteins gB and gH. In human cytomegalovirus, forms two distincts complexes to mediate viral entry, a trimer and a pentamer at the surface of the virion envelope. The gH-gL-gO trimer is required for infection in fibroblasts by interacting with host PDGFRA, and in glioblastoma cells by interacting with host EPHA2. The gH-gL-UL128-UL130-UL131A pentamer is essential for viral entry in epithelial, endothelial and myeloid cells via interaction with host NRP2. The protein is Envelope glycoprotein L of Homo sapiens (Human).